A 263-amino-acid chain; its full sequence is 3-deoxy-manno-octulosonate cytidylyltransferase (263 aa).

This sequence belongs to the KdsB family.

Its subcellular location is the cytoplasm. The catalysed reaction is 3-deoxy-alpha-D-manno-oct-2-ulosonate + CTP = CMP-3-deoxy-beta-D-manno-octulosonate + diphosphate. It participates in nucleotide-sugar biosynthesis; CMP-3-deoxy-D-manno-octulosonate biosynthesis; CMP-3-deoxy-D-manno-octulosonate from 3-deoxy-D-manno-octulosonate and CTP: step 1/1. Its pathway is bacterial outer membrane biogenesis; lipopolysaccharide biosynthesis. Functionally, activates KDO (a required 8-carbon sugar) for incorporation into bacterial lipopolysaccharide in Gram-negative bacteria. The protein is 3-deoxy-manno-octulosonate cytidylyltransferase of Burkholderia multivorans (strain ATCC 17616 / 249).